Consider the following 178-residue polypeptide: MTDPIEQAFERIRAEAMRRNGSVPDLNKNDAFRRPPAPKGGVEKRKKGRASGLDGRQKRYVRGAESLGSVLNKEIQRRGWGKDIAGGWVTSNWEELVGAKIAQHTRVEMIKDKKLFITCDSTAWATNLRMMQRQILQVIAEKVGPNIITELRIFGPQAPSWRKGPLHVKGRGPRDTYG.

The interval 16-55 (AMRRNGSVPDLNKNDAFRRPPAPKGGVEKRKKGRASGLDG) is disordered.

The protein belongs to the UPF0232 family.

The chain is UPF0232 protein cgR_0005 from Corynebacterium glutamicum (strain R).